The following is a 530-amino-acid chain: Negative elongation factor A (530 aa).

An HDAg domain is found at 89 to 248; it reads WVLMVADILK…TPIPPSRTPL (160 aa). Residues 125–188 are NELF-C/D-binding; that stretch reads REKVSECEAS…LQKSTETAQQ (64 aa). Position 157 is a phosphothreonine (Thr157). The tract at residues 189 to 248 is RNAPII-binding; sequence LKRSAGVPFHAKGRGLLRKMDTTTPLKGIPKQAPFRSPTTPSVFSPSGNRTPIPPSRTPL. Disordered stretches follow at residues 213–248, 266–296, and 312–409; these read PLKG…RTPL, GAGR…VENA, and SLNS…TAQT. A phosphoserine mark is found at Ser225 and Ser233. Polar residues predominate over residues 225–238; that stretch reads SPTTPSVFSPSGNR. The residue at position 277 (Thr277) is a Phosphothreonine. Over residues 277–291 the composition is skewed to basic and acidic residues; the sequence is TLDTEVVEKPTKEET. The span at 315 to 341 shows a compositional bias: low complexity; the sequence is SEPTLPSTSYLPSTPSVVPASSYIPSS. A Phosphoserine modification is found at Ser363.

Belongs to the NELF-A family. As to quaternary structure, the NELF complex is composed of NELFA, NELFB, NELFCD and NELFE; NELFA and NELFCD form a stable subcomplex that binds to the N-terminus of NELFB. In vitro, the NELFA:NELFCD subcomplex binds to ssDNA and ssRNA in a sequence- and structure-dependent manner. Interacts with the RNA polymerase II complex when it is not phosphorylated by P-TEFb. Interacts with NELFB. As to expression, ubiquitous. Expressed in brain, heart, spleen, lung, liver, muscle, kidney and testis. Already expressed in 7 dpc embryos.

It localises to the nucleus. Its function is as follows. Essential component of the NELF complex, a complex that negatively regulates the elongation of transcription by RNA polymerase II. The NELF complex, which acts via an association with the DSIF complex and causes transcriptional pausing, is counteracted by the P-TEFb kinase complex. This is Negative elongation factor A (Nelfa) from Mus musculus (Mouse).